The sequence spans 84 residues: Large ribosomal subunit protein bL27 (84 aa).

The tract at residues 1-20 (MAHKKAGGSTRNGRDSNPKY) is disordered.

Belongs to the bacterial ribosomal protein bL27 family.

This chain is Large ribosomal subunit protein bL27, found in Francisella philomiragia subsp. philomiragia (strain ATCC 25017 / CCUG 19701 / FSC 153 / O#319-036).